A 99-amino-acid chain; its full sequence is RNA-binding protein Hfq (99 aa).

The Sm domain occupies 9–68 (DPFLNALRRERVPVSIYLVNGIKLQGQIESFDQFVILLKNTVSQMVYKHAISTVVPSRPV). The interval 64–99 (PSRPVSHHSNNPGGGSNYHGNNTAASQQSQEADDAE) is disordered.

It belongs to the Hfq family. Homohexamer.

RNA chaperone that binds small regulatory RNA (sRNAs) and mRNAs to facilitate mRNA translational regulation in response to envelope stress, environmental stress and changes in metabolite concentrations. Also binds with high specificity to tRNAs. This Pectobacterium carotovorum subsp. carotovorum (strain PC1) protein is RNA-binding protein Hfq.